We begin with the raw amino-acid sequence, 488 residues long: Zinc metalloproteinase-disintegrin VMP-II (488 aa).

The first 20 residues, 1 to 20 (MIQVLLVTICLAVFPYQGSS), serve as a signal peptide directing secretion. Positions 21 to 191 (IILESGNVND…KASQSNIPPE (171 aa)) are excised as a propeptide. The 199-residue stretch at 198–396 (RYIELVVVAD…STTRCLHNEP (199 aa)) folds into the Peptidase M12B domain. Residues Glu-201 and Asp-285 each contribute to the Ca(2+) site. Asn-296 is a glycosylation site (N-linked (GlcNAc...) asparagine). Intrachain disulfides connect Cys-309–Cys-391, Cys-349–Cys-373, and Cys-351–Cys-356. His-334 provides a ligand contact to Zn(2+). Glu-335 is a catalytic residue. Residues His-338 and His-344 each contribute to the Zn(2+) site. Positions 391, 394, 409, 413, 416, and 419 each coordinate Ca(2+). The Disintegrin domain occupies 404–488 (PPFCGNYFKE…ADCPRNGLYG (85 aa)). 7 disulfide bridges follow: Cys-407-Cys-426, Cys-418-Cys-436, Cys-420-Cys-431, Cys-430-Cys-453, Cys-444-Cys-450, Cys-449-Cys-474, and Cys-462-Cys-481. A Cell attachment site motif is present at residues 466–468 (RGD).

Belongs to the venom metalloproteinase (M12B) family. P-II subfamily. P-IIb sub-subfamily. In terms of assembly, homodimer; disulfide-linked (disintegrin). It depends on Zn(2+) as a cofactor. In terms of tissue distribution, expressed by the venom gland.

It localises to the secreted. Functionally, zinc metalloproteinase-disintegrin VMP-II: inhibits ADP-induced platelet aggregation (probably by binding integrin alpha-IIb/beta-3 (ITGA2B/ITGB3)) and degrades fibrinogen. Recombinant disintegrin r-Cam-dis (413-488): this recombinant protein inhibits platelet adhesion to fibrinogen (IC(50) is 1 nM), inhibits collagen- (IC(50) is 18 nM) and ADP-induced (IC(50) is 6 nM) platelet aggregation, and also inhibits platelet function on clot retraction. May act by binding integrin alpha-IIb/beta-3 (ITGA2B/ITGB3). The protein is Zinc metalloproteinase-disintegrin VMP-II of Crotalus adamanteus (Eastern diamondback rattlesnake).